Reading from the N-terminus, the 213-residue chain is Redox-sensing transcriptional repressor Rex (213 aa).

Positions Leu18–Phe57 form a DNA-binding region, H-T-H motif. Position 92–97 (Gly92–Gly97) interacts with NAD(+).

The protein belongs to the transcriptional regulatory Rex family. Homodimer.

It localises to the cytoplasm. Functionally, modulates transcription in response to changes in cellular NADH/NAD(+) redox state. This chain is Redox-sensing transcriptional repressor Rex, found in Staphylococcus saprophyticus subsp. saprophyticus (strain ATCC 15305 / DSM 20229 / NCIMB 8711 / NCTC 7292 / S-41).